The chain runs to 273 residues: UPF0380 protein YubP (273 aa).

Belongs to the UPF0380 family.

In Escherichia coli (strain K12), this protein is UPF0380 protein YubP (yubP).